We begin with the raw amino-acid sequence, 325 residues long: Beta-ketoacyl-[acyl-carrier-protein] synthase III (325 aa).

Residues Cys-114 and His-252 contribute to the active site. The segment at Gln-253–Arg-257 is ACP-binding. The active site involves Asn-282.

This sequence belongs to the thiolase-like superfamily. FabH family. In terms of assembly, homodimer.

The protein localises to the cytoplasm. The enzyme catalyses malonyl-[ACP] + acetyl-CoA + H(+) = 3-oxobutanoyl-[ACP] + CO2 + CoA. Its pathway is lipid metabolism; fatty acid biosynthesis. Catalyzes the condensation reaction of fatty acid synthesis by the addition to an acyl acceptor of two carbons from malonyl-ACP. Catalyzes the first condensation reaction which initiates fatty acid synthesis and may therefore play a role in governing the total rate of fatty acid production. Possesses both acetoacetyl-ACP synthase and acetyl transacylase activities. Its substrate specificity determines the biosynthesis of branched-chain and/or straight-chain of fatty acids. The chain is Beta-ketoacyl-[acyl-carrier-protein] synthase III from Novosphingobium aromaticivorans (strain ATCC 700278 / DSM 12444 / CCUG 56034 / CIP 105152 / NBRC 16084 / F199).